The following is a 364-amino-acid chain: MSHNSFGHLFRVTTWGESHGLALGCVVDGCPPGITFTEAEIQAYLDKRKPGQSKYTTQRREPDQVRVLSGVLLGDDGVTMTTTGTPISMMIENTDQRSKDYGEIARQYRPGHADYTYDVKYGIRDYRGGGRSSARETAARVAAGAIARKVVPGLEVKGALVAMGVHGIDRRRWNWSEVDNNPFFSPDAGSVELFADYLDGIRKSGSSVGAVIEIIAEGVPAGIGAPIYGKLDQDIASLLMSINAVKGVEIGNGFEAARLTGEENADEMRIGNDGKPLFLSNHAGGILGGIATGAPVVARFAVKPTSSILTPRRSIDKDGKEVDVMTKGRHDPCVGIRAVPIGEAMVACAIADHYLRHRGQTGRV.

Residue R48 coordinates NADP(+). FMN-binding positions include R131–S133, N243–A244, G288, K303–S307, and R329.

This sequence belongs to the chorismate synthase family. In terms of assembly, homotetramer. FMNH2 serves as cofactor.

The catalysed reaction is 5-O-(1-carboxyvinyl)-3-phosphoshikimate = chorismate + phosphate. It functions in the pathway metabolic intermediate biosynthesis; chorismate biosynthesis; chorismate from D-erythrose 4-phosphate and phosphoenolpyruvate: step 7/7. Its function is as follows. Catalyzes the anti-1,4-elimination of the C-3 phosphate and the C-6 proR hydrogen from 5-enolpyruvylshikimate-3-phosphate (EPSP) to yield chorismate, which is the branch point compound that serves as the starting substrate for the three terminal pathways of aromatic amino acid biosynthesis. This reaction introduces a second double bond into the aromatic ring system. The protein is Chorismate synthase of Brucella anthropi (strain ATCC 49188 / DSM 6882 / CCUG 24695 / JCM 21032 / LMG 3331 / NBRC 15819 / NCTC 12168 / Alc 37) (Ochrobactrum anthropi).